The sequence spans 360 residues: Phospho-N-acetylmuramoyl-pentapeptide-transferase (360 aa).

Helical transmembrane passes span 26–46 (AIVS…RLIA), 72–92 (PTMG…LWAY), 94–114 (SNPY…VGFV), 132–152 (WKYF…YITG), 168–188 (VMPQ…VGTG), 199–219 (GLAI…AWAT), 236–256 (AGEL…FLWF), 263–283 (VFMG…IAVL), 288–308 (FLLV…ILQV), and 338–358 (VIVR…ATLK).

This sequence belongs to the glycosyltransferase 4 family. MraY subfamily. Requires Mg(2+) as cofactor.

The protein localises to the cell inner membrane. It carries out the reaction UDP-N-acetyl-alpha-D-muramoyl-L-alanyl-gamma-D-glutamyl-meso-2,6-diaminopimeloyl-D-alanyl-D-alanine + di-trans,octa-cis-undecaprenyl phosphate = di-trans,octa-cis-undecaprenyl diphospho-N-acetyl-alpha-D-muramoyl-L-alanyl-D-glutamyl-meso-2,6-diaminopimeloyl-D-alanyl-D-alanine + UMP. Its pathway is cell wall biogenesis; peptidoglycan biosynthesis. Its function is as follows. Catalyzes the initial step of the lipid cycle reactions in the biosynthesis of the cell wall peptidoglycan: transfers peptidoglycan precursor phospho-MurNAc-pentapeptide from UDP-MurNAc-pentapeptide onto the lipid carrier undecaprenyl phosphate, yielding undecaprenyl-pyrophosphoryl-MurNAc-pentapeptide, known as lipid I. The chain is Phospho-N-acetylmuramoyl-pentapeptide-transferase from Cronobacter sakazakii (strain ATCC BAA-894) (Enterobacter sakazakii).